Reading from the N-terminus, the 626-residue chain is 5'-AMP-activated protein kinase catalytic subunit alpha-2 (626 aa).

The span at 1 to 24 (MFSHQDRDRDRKEDGGGDGTEMKS) shows a compositional bias: basic and acidic residues. The tract at residues 1 to 77 (MFSHQDRDRD…GETSTKQQQE (77 aa)) is disordered. Residues 38-49 (NLSRKLSAKSRK) show a composition bias toward basic residues. Residues 58–77 (DNSSKMSSPGGETSTKQQQE) show a composition bias toward polar residues. The 253-residue stretch at 87–339 (YILKETLGVG…IKDVIAHEWF (253 aa)) folds into the Protein kinase domain. ATP contacts are provided by residues 93-101 (LGVGTFGKV) and lysine 116. The active-site Proton acceptor is aspartate 210. Threonine 243 carries the phosphothreonine; by par-4 modification. The segment at 541-568 (SGSASASSSRHASMSMPQKPAGIRGTRT) is disordered. Residues 542–555 (GSASASSSRHASMS) show a composition bias toward low complexity.

The protein belongs to the protein kinase superfamily. CAMK Ser/Thr protein kinase family. SNF1 subfamily. In terms of assembly, tetramer, composed of 2 regulatory (R) and 2 catalytic (C) subunits. In the presence of cAMP it dissociates into 2 active monomeric C subunits and an R dimer that binds four cAMP molecules. Post-translationally, phosphorylated on Thr-243 in response to oxidative stress and during dauer development. Phosphorylation at Thr-243 is increased in response to sodium azide or the AMP analog AICAR (5-amino-1-(5-phospho-beta-D-ribosyl)imidazole-4-carboxamide). Expressed in the pharynx, the ventral cord, neurons including the hermaphrodite-specific neuron, body wall muscles, the vulva, the excretory canal, and weakly in the intestine.

It carries out the reaction L-seryl-[protein] + ATP = O-phospho-L-seryl-[protein] + ADP + H(+). It catalyses the reaction L-threonyl-[protein] + ATP = O-phospho-L-threonyl-[protein] + ADP + H(+). Its activity is regulated as follows. Activated by phosphorylation. Functionally, acts as a sensor that couples lifespan to information about energy levels and insulin-like signals. Role in motility and response to oxidative stress. Involved in the establishment of germline stem cell (GSC) quiescence during dauer development. Plays a role in axon regrowth after axotomy in PLM neurons. Plays a role in the maintenance of glycogen stores which are necessary for resistance to hyperosmotic stress. Plays a role in the regulation of flp-7 secretion from ASI neurons. Keeps the CREB-regulated transcription coactivator 1 homolog crtc-1 inactive which in turn inhibits flp-7 secretion. Following serotonin signaling, derepresses crtc-1 which stimulates flp-7 secretion and subsequent body fat loss. This chain is 5'-AMP-activated protein kinase catalytic subunit alpha-2, found in Caenorhabditis elegans.